The primary structure comprises 638 residues: NBPF family member NBPF4 (638 aa).

Coiled coils occupy residues 10-43 (SERAEMNILEINQELRSQLAESNQQFRDLKEKFL) and 69-115 (DSVL…KLRE). A disordered region spans residues 157–285 (HLVHKLSPEN…VPPRHHDKSN (129 aa)). A compositionally biased stretch (acidic residues) spans 165–179 (ENDEDEDEDEDDKDE). An Olduvai 1 domain is found at 174–261 (EDDKDEEVEK…EEEEALNIPP (88 aa)). Over residues 192–202 (EVQKTEEKEVP) the composition is skewed to basic and acidic residues. Over residues 214 to 226 (SNSHNPSNSNQPH) the composition is skewed to low complexity. Basic and acidic residues-rich tracts occupy residues 232–251 (TFKEHEVDSALVVESEHPHD) and 264–273 (QNDHEEEEGK). Olduvai domains follow at residues 326–399 (EKQS…ALVD) and 400–503 (KIKK…SQAQ). The disordered stretch occupies residues 562 to 584 (GMKNPPQLEDDALEGSASNTQGR).

The protein belongs to the NBPF family. In terms of tissue distribution, expressed in testis.

The protein resides in the cytoplasm. In Homo sapiens (Human), this protein is NBPF family member NBPF4.